We begin with the raw amino-acid sequence, 119 residues long: Ribonuclease P protein component (119 aa).

Belongs to the RnpA family. Consists of a catalytic RNA component (M1 or rnpB) and a protein subunit.

It catalyses the reaction Endonucleolytic cleavage of RNA, removing 5'-extranucleotides from tRNA precursor.. Its function is as follows. RNaseP catalyzes the removal of the 5'-leader sequence from pre-tRNA to produce the mature 5'-terminus. It can also cleave other RNA substrates such as 4.5S RNA. The protein component plays an auxiliary but essential role in vivo by binding to the 5'-leader sequence and broadening the substrate specificity of the ribozyme. This is Ribonuclease P protein component from Histophilus somni (strain 129Pt) (Haemophilus somnus).